The following is a 115-amino-acid chain: Beta-2-microglobulin (115 aa).

The N-terminal stretch at 1 to 18 is a signal peptide; sequence MGLLICSLLLGLLCCSMA. In terms of domain architecture, Ig-like C1-type spans 23–114; sequence PKVEVYTREP…KSKDHFLMIG (92 aa).

Belongs to the beta-2-microglobulin family. In terms of assembly, heterodimer of an alpha chain and a beta chain. Beta-2-microglobulin is the beta-chain of major histocompatibility complex class I molecules.

Its subcellular location is the secreted. Its function is as follows. Component of the class I major histocompatibility complex (MHC). Involved in the presentation of peptide antigens to the immune system. In Paralichthys olivaceus (Bastard halibut), this protein is Beta-2-microglobulin (b2m).